Here is a 527-residue protein sequence, read N- to C-terminus: Rhamnogalacturonate lyase A (527 aa).

A signal peptide spans 1-20 (MLSKTFLLSSAVLWARVANA). 2 N-linked (GlcNAc...) asparagine glycosylation sites follow: Asn27 and Asn46. 2 cysteine pairs are disulfide-bonded: Cys50/Cys93 and Cys184/Cys193. A glycan (N-linked (GlcNAc...) asparagine) is linked at Asn351.

The protein belongs to the polysaccharide lyase 4 family.

It is found in the secreted. It catalyses the reaction Endotype eliminative cleavage of L-alpha-rhamnopyranosyl-(1-&gt;4)-alpha-D-galactopyranosyluronic acid bonds of rhamnogalacturonan I domains in ramified hairy regions of pectin leaving L-rhamnopyranose at the reducing end and 4-deoxy-4,5-unsaturated D-galactopyranosyluronic acid at the non-reducing end.. In terms of biological role, pectinolytic enzymes consist of four classes of enzymes: pectin lyase, polygalacturonase, pectin methylesterase and rhamnogalacturonase. Degrades the rhamnogalacturonan I (RG-I) backbone of pectin. Active against linseed rhamnogalacturonan. The protein is Rhamnogalacturonate lyase A (rglA) of Emericella nidulans (strain FGSC A4 / ATCC 38163 / CBS 112.46 / NRRL 194 / M139) (Aspergillus nidulans).